We begin with the raw amino-acid sequence, 847 residues long: A-kinase anchor protein 4 (847 aa).

Positions 1 to 187 are excised as a propeptide; the sequence is MIAYCGTTKM…MAASKNTNNN (187 aa). Phosphoserine occurs at positions 95, 129, 189, and 203. The span at 182-204 shows a compositional bias: polar residues; the sequence is KNTNNNQSPSNPATKSPSNQRSV. The disordered stretch occupies residues 182–209; it reads KNTNNNQSPSNPATKSPSNQRSVATPDG. At T206 the chain carries Phosphothreonine. A phosphoserine mark is found at S212, S225, and S270. The tract at residues 218–231 is interaction with Prkar1a and Prkar2a; the sequence is YYVNRLSSLVIQMA. The residue at position 300 (Y300) is a Phosphotyrosine. 10 positions are modified to phosphoserine: S301, S304, S340, S430, S441, S443, S462, S491, S496, and S503. A PKA-RI subunit binding domain region spans residues 334-343; the sequence is YANQVASDMM. T505 carries the post-translational modification Phosphothreonine. Positions 511–536 are disordered; the sequence is KQGTQGRVPNKVCPSKDEKREKISPS. Residues 524-533 are compositionally biased toward basic and acidic residues; the sequence is PSKDEKREKI. Phosphoserine is present on residues S536 and S581. The interval 583 to 613 is disordered; that stretch reads QYEKSGGGQSSKSLSMKHFESRGAPGPSTCA. Phosphoserine is present on residues S626, S631, S648, S650, S674, S677, S700, and S729. Positions 655–677 are disordered; that stretch reads CCDSRSKQAAPVAKRPEDQSQDS.

It belongs to the AKAP110 family. In terms of assembly, interacts with PRKAR1A and PRKAR2A. Interacts with ENO4. Interacts with QRICH2. Post-translationally, phosphorylated by STK33 during sperm flagella assembly. In terms of tissue distribution, expressed in flagella of epididymal sperm.

It is found in the cell projection. Its subcellular location is the cilium. The protein localises to the flagellum. Major structural component of sperm fibrous sheath. May play a role in sperm motility. The chain is A-kinase anchor protein 4 from Rattus norvegicus (Rat).